The following is a 259-amino-acid chain: DNA adenine methylase (259 aa).

Residues tyrosine 7, lysine 11, 32-37, aspartate 50, 156-157, aspartate 171, and tyrosine 181 contribute to the S-adenosyl-L-methionine site; these read FCGGLS and HF.

This sequence belongs to the N(4)/N(6)-methyltransferase family. Monomer.

The catalysed reaction is a 2'-deoxyadenosine in DNA + S-adenosyl-L-methionine = an N(6)-methyl-2'-deoxyadenosine in DNA + S-adenosyl-L-homocysteine + H(+). Functionally, an alpha subtype methylase, recognizes the double-stranded sequence 5'-GATC-3' and methylates A-2. Also acts on 5-hydroxymethylcytosine (hmC)-containing DNA, the normal base in this virus. May prevent degradation of viral DNA by the host restriction-modification antiviral defense system. The protein is DNA adenine methylase of Enterobacteria phage T4 (Bacteriophage T4).